Consider the following 51-residue polypeptide: Putative protein LomR (51 aa).

It belongs to the outer membrane OOP (TC 1.B.6) superfamily. Ail family.

The protein is Putative protein LomR (lomR) of Escherichia coli (strain K12).